The chain runs to 482 residues: Anaerobic nitric oxide reductase flavorubredoxin (482 aa).

The segment at L30–I210 is zinc metallo-hydrolase. 6 residues coordinate Fe cation: H79, E81, D83, H147, D166, and H227. The Flavodoxin-like domain occupies I254–A393. Residues T260–N264 and A342–M369 contribute to the FMN site. The Rubredoxin-like domain maps to G426–L477. Residues C431, C434, C464, and C467 each contribute to the Fe cation site.

This sequence in the N-terminal section; belongs to the zinc metallo-hydrolase group 3 family. In terms of assembly, homotetramer. It depends on Fe cation as a cofactor. The cofactor is FMN.

It localises to the cytoplasm. It participates in nitrogen metabolism; nitric oxide reduction. In terms of biological role, anaerobic nitric oxide reductase; uses NADH to detoxify nitric oxide (NO), protecting several 4Fe-4S NO-sensitive enzymes. Has at least 2 reductase partners, only one of which (NorW, flavorubredoxin reductase) has been identified. NO probably binds to the di-iron center; electrons enter from the NorW at rubredoxin and are transferred sequentially to the FMN center and the di-iron center. Also able to function as an aerobic oxygen reductase. This Enterobacter sp. (strain 638) protein is Anaerobic nitric oxide reductase flavorubredoxin.